A 504-amino-acid chain; its full sequence is Pentatricopeptide repeat-containing protein At5g16640, mitochondrial (504 aa).

A mitochondrion-targeting transit peptide spans 1–43 (MRRSISSKAKSFLHRNLLYSGNSGTSPSSSFSICGFCFSRRAY). PPR repeat units follow at residues 45–79 (NGSD…RPLP), 80–114 (SIAD…GIPH), 115–149 (NLCT…GHEP), 150–184 (SIVT…GYKP), 185–219 (NVVI…GIGP), 220–254 (DVVT…EIYP), 255–289 (DVFT…SLDP), 290–324 (DIVT…GCFP), 325–359 (DVVT…GVVR), 360–394 (NTVT…GVHP), 395–429 (NIIT…GMDA), 430–464 (DIVT…GLMP), and 465–499 (DIWT…GILP).

It belongs to the PPR family. P subfamily.

The protein localises to the mitochondrion. The protein is Pentatricopeptide repeat-containing protein At5g16640, mitochondrial of Arabidopsis thaliana (Mouse-ear cress).